The sequence spans 311 residues: Porphobilinogen deaminase (311 aa).

Position 241 is an S-(dipyrrolylmethanemethyl)cysteine (C241).

The protein belongs to the HMBS family. Monomer. It depends on dipyrromethane as a cofactor.

The enzyme catalyses 4 porphobilinogen + H2O = hydroxymethylbilane + 4 NH4(+). It participates in porphyrin-containing compound metabolism; protoporphyrin-IX biosynthesis; coproporphyrinogen-III from 5-aminolevulinate: step 2/4. In terms of biological role, tetrapolymerization of the monopyrrole PBG into the hydroxymethylbilane pre-uroporphyrinogen in several discrete steps. In Shouchella clausii (strain KSM-K16) (Alkalihalobacillus clausii), this protein is Porphobilinogen deaminase.